A 706-amino-acid chain; its full sequence is DNA ligase (706 aa).

Residues 40–44, 89–90, and E120 each bind NAD(+); these read DLQYD and SI. Residue K122 is the N6-AMP-lysine intermediate of the active site. NAD(+)-binding residues include R143, E190, K306, and K330. Residues C424, C427, C442, and C447 each coordinate Zn(2+). The BRCT domain occupies 625–706; sequence EANLPLAGKN…FRLRYETEAT (82 aa).

The protein belongs to the NAD-dependent DNA ligase family. LigA subfamily. Requires Mg(2+) as cofactor. The cofactor is Mn(2+).

The enzyme catalyses NAD(+) + (deoxyribonucleotide)n-3'-hydroxyl + 5'-phospho-(deoxyribonucleotide)m = (deoxyribonucleotide)n+m + AMP + beta-nicotinamide D-nucleotide.. Functionally, DNA ligase that catalyzes the formation of phosphodiester linkages between 5'-phosphoryl and 3'-hydroxyl groups in double-stranded DNA using NAD as a coenzyme and as the energy source for the reaction. It is essential for DNA replication and repair of damaged DNA. This Rhodopirellula baltica (strain DSM 10527 / NCIMB 13988 / SH1) protein is DNA ligase.